The chain runs to 405 residues: DNA primase DnaG (405 aa).

A Toprim domain is found at 172-248; sequence DSIIVVEGRA…HIDYIARAPP (77 aa). Mg(2+) contacts are provided by E178, D222, and D224. Residues 279-302 are disordered; sequence AAGEKTESQMSPQQPQLTQTQPTT. Over residues 290-302 the composition is skewed to low complexity; sequence PQQPQLTQTQPTT.

This sequence belongs to the archaeal DnaG primase family. In terms of assembly, forms a ternary complex with MCM helicase and DNA. Component of the archaeal exosome complex. Requires Mg(2+) as cofactor.

The catalysed reaction is ssDNA + n NTP = ssDNA/pppN(pN)n-1 hybrid + (n-1) diphosphate.. RNA polymerase that catalyzes the synthesis of short RNA molecules used as primers for DNA polymerase during DNA replication. Also part of the exosome, which is a complex involved in RNA degradation. Acts as a poly(A)-binding protein that enhances the interaction between heteromeric, adenine-rich transcripts and the exosome. The polypeptide is DNA primase DnaG (Pyrobaculum islandicum (strain DSM 4184 / JCM 9189 / GEO3)).